The chain runs to 88 residues: Small ribosomal subunit protein bS18 (88 aa).

The interval 1 to 26 (MAFAQSGGAGGGGGQRRPFFRRRKTC) is disordered.

The protein belongs to the bacterial ribosomal protein bS18 family. In terms of assembly, part of the 30S ribosomal subunit. Forms a tight heterodimer with protein bS6.

Its function is as follows. Binds as a heterodimer with protein bS6 to the central domain of the 16S rRNA, where it helps stabilize the platform of the 30S subunit. In Xanthobacter autotrophicus (strain ATCC BAA-1158 / Py2), this protein is Small ribosomal subunit protein bS18.